A 934-amino-acid polypeptide reads, in one-letter code: Protocadherin gamma-C3 (934 aa).

A signal peptide spans 1–31 (MVPEAWRSGLVSTGRVVGVLLLLGALNKAST). 6 Cadherin domains span residues 32–135 (VIHY…NPAF), 136–244 (PTQE…APVF), 245–352 (NQSL…APEI), 353–457 (TVTS…PPQS), 458–567 (SQSS…APQV), and 572–685 (PGGS…APRE). At 32–693 (VIHYEIPEER…REQNKNLTFY (662 aa)) the chain is on the extracellular side. Residues Asn245, Asn424, Asn478, Asn550, Asn615, and Asn689 are each glycosylated (N-linked (GlcNAc...) asparagine). A helical transmembrane segment spans residues 694 to 714 (LLLSLILVSVGFVVTVFGVII). Over 715 to 934 (FKVYKWKQSR…KKKSGKKEKK (220 aa)) the chain is Cytoplasmic. 2 disordered regions span residues 804 to 843 (ESAP…WPNN) and 904 to 934 (ATLT…KEKK). Residues 812-843 (APPNTDWRFSQAQRPGTSGSQNGDDTGTWPNN) are compositionally biased toward polar residues. The segment covering 924–934 (NKKKSGKKEKK) has biased composition (basic residues).

The protein resides in the cell membrane. Potential calcium-dependent cell-adhesion protein. May be involved in the establishment and maintenance of specific neuronal connections in the brain. The polypeptide is Protocadherin gamma-C3 (PCDHGC3) (Pan troglodytes (Chimpanzee)).